The chain runs to 414 residues: Sex comb on midleg-like protein 4 (414 aa).

Residues Ser-55 and Ser-65 each carry the phosphoserine modification. Residues 257–276 (HRGSLHPSSSLYCKRQNSGD) show a composition bias toward polar residues. The interval 257 to 343 (HRGSLHPSSS…DARRPRSRNP (87 aa)) is disordered. Residues 284–304 (AATAGGPRTSPMSSGGPSAPG) are compositionally biased toward low complexity. The region spanning 288 to 354 (GGPRTSPMSS…AWTVEDVVWF (67 aa)) is the SAM domain. The segment covering 312–332 (PKRNTTSLEGNRCASSPSQDA) has biased composition (polar residues).

The protein belongs to the SCM family.

It is found in the nucleus. Putative Polycomb group (PcG) protein. PcG proteins act by forming multiprotein complexes, which are required to maintain the transcriptionally repressive state of homeotic genes throughout development. In Homo sapiens (Human), this protein is Sex comb on midleg-like protein 4 (SCML4).